A 631-amino-acid polypeptide reads, in one-letter code: Nucleoside triphosphatase I (631 aa).

In terms of domain architecture, Helicase ATP-binding spans 42–204 (FLGLDSMHSL…TMLVNLLRPG (163 aa)). 55–62 (HETGVGKT) is an ATP binding site. The DEXH box motif lies at 141–144 (DECH). The 166-residue stretch at 367-532 (KFIDVCLGIL…EFVQLFRVFK (166 aa)) folds into the Helicase C-terminal domain. The binding to the cap-specific mRNA (nucleoside-2'-O-)-methyltransferase stretch occupies residues 457 to 524 (DIFILDMTWN…EIIQSKSKEF (68 aa)).

This sequence belongs to the helicase family. NPH I subfamily. In terms of assembly, monomer. Interacts (via C-terminus) with RAP94/OPG109 (via N-terminus). Interacts with the cap-specific mRNA (nucleoside-2'-O-)-methyltransferase OPG102.

It localises to the virion. It carries out the reaction a ribonucleoside 5'-triphosphate + H2O = a ribonucleoside 5'-diphosphate + phosphate + H(+). In terms of biological role, DNA-dependent ATPase that acts as a 5' to 3' translocase on single-stranded DNA and thereby plays a role in transcription termination of viral early genes. Uses forward translocation in concert with the viral RNA polymerase RAP94/OPG109 subunit and the capping enzyme/VTF to catalyze release of UUUUUNU-containing nascent RNA from the elongation complex. In addition, acts as a positive elongation factor to assist transcription through problematic sequences. This chain is Nucleoside triphosphatase I (OPG123), found in Vaccinia virus (strain Copenhagen) (VACV).